We begin with the raw amino-acid sequence, 541 residues long: T-complex protein 1 subunit epsilon (541 aa).

The residue at position 2 (A2) is an N-acetylalanine. K20 participates in a covalent cross-link: Glycyl lysine isopeptide (Lys-Gly) (interchain with G-Cter in SUMO2). S26 bears the Phosphoserine mark. G53 is a binding site for ADP. An ATP-binding site is contributed by G53. D104 provides a ligand contact to Mg(2+). Residues G105, T106, T107, and S175 each contribute to the ADP site. The ATP site is built by T106 and T107. Glycyl lysine isopeptide (Lys-Gly) (interchain with G-Cter in SUMO2) cross-links involve residues K210, K214, K265, K275, and K279. S346 carries the post-translational modification Phosphoserine. K392 is covalently cross-linked (Glycyl lysine isopeptide (Lys-Gly) (interchain with G-Cter in SUMO2)). G422, D492, E508, and K513 together coordinate ADP. G422 serves as a coordination point for ATP. S539 is modified (phosphoserine).

The protein belongs to the TCP-1 chaperonin family. Component of the chaperonin-containing T-complex (TRiC), a hexadecamer composed of two identical back-to-back stacked rings enclosing a protein folding chamber. Each ring is made up of eight different subunits: TCP1/CCT1, CCT2, CCT3, CCT4, CCT5, CCT6A/CCT6, CCT7, CCT8. Interacts with PACRG. Interacts with DNAAF4. Interacts with DLEC1. Interacts with SPMAP2. Ubiquitinated by the DCX(DCAF12) complex specifically recognizes the diglutamate (Glu-Glu) at the C-terminus, leading to its degradation.

It is found in the cytoplasm. It localises to the cytoskeleton. The protein resides in the microtubule organizing center. Its subcellular location is the centrosome. The enzyme catalyses ATP + H2O = ADP + phosphate + H(+). Component of the chaperonin-containing T-complex (TRiC), a molecular chaperone complex that assists the folding of actin, tubulin and other proteins upon ATP hydrolysis. The TRiC complex mediates the folding of WRAP53/TCAB1, thereby regulating telomere maintenance. As part of the TRiC complex may play a role in the assembly of BBSome, a complex involved in ciliogenesis regulating transports vesicles to the cilia. This chain is T-complex protein 1 subunit epsilon (CCT5), found in Homo sapiens (Human).